Here is a 153-residue protein sequence, read N- to C-terminus: Transcriptional repressor NrdR (153 aa).

A disordered region spans residues 1–22 (MRCPACHHNGTRVLDSRPAHEG). Residues 3 to 34 (CPACHHNGTRVLDSRPAHEGRSIRRRRECESC) fold into a zinc finger. An ATP-cone domain is found at 49-139 (LIVVKKDGTR…VYRQFKDINV (91 aa)).

Belongs to the NrdR family. The cofactor is Zn(2+).

Functionally, negatively regulates transcription of bacterial ribonucleotide reductase nrd genes and operons by binding to NrdR-boxes. This chain is Transcriptional repressor NrdR, found in Halalkalibacterium halodurans (strain ATCC BAA-125 / DSM 18197 / FERM 7344 / JCM 9153 / C-125) (Bacillus halodurans).